Here is a 491-residue protein sequence, read N- to C-terminus: Transcription factor AP-2-alpha (491 aa).

The segment at 74 to 161 is disordered; sequence GASNGTARLP…GQRQSQESGL (88 aa). The PPxY motif motif lies at 111 to 116; the sequence is YFPPPY. Low complexity-rich tracts occupy residues 119–128 and 142–155; these read IYPQSQDPYS and QPQPQHPGWPGQRQ. Glycyl lysine isopeptide (Lys-Gly) (interchain with G-Cter in SUMO2) cross-links involve residues Lys231 and Lys238. Phosphoserine; by PKA is present on Ser293. Residues 334-464 form an H-S-H (helix-span-helix), dimerization region; that stretch reads RRKAANVTLL…YLTEALKAMD (131 aa). A compositionally biased stretch (polar residues) spans 468 to 481; the sequence is LSNNPNSHTDNSAK. The tract at residues 468-491 is disordered; sequence LSNNPNSHTDNSAKSSDKEEKHRK. The span at 482–491 shows a compositional bias: basic and acidic residues; the sequence is SSDKEEKHRK.

The protein belongs to the AP-2 family. As to quaternary structure, binds DNA as a dimer. Can form homodimers or heterodimers with other AP-2 family members. Interacts with WWOX. Interacts with CITED4. Interacts with UBE2I. Interacts with RALBP1 in a complex also containing EPN1 and NUMB during interphase and mitosis. Interacts with KCTD1; this interaction represses transcription activation. Interacts (via C-terminus) with CITED2 (via C-terminus); the interaction stimulates TFAP2A-transcriptional activation. Interacts (via N-terminus) with EP300 (via N-terminus); the interaction requires CITED2. Interacts with KCTD15; this interaction inhibits TFAP2A transcriptional activation.

It localises to the nucleus. Its function is as follows. Sequence-specific DNA-binding protein that interacts with inducible viral and cellular enhancer elements to regulate transcription of selected genes. AP-2 factors bind to the consensus sequence 5'-GCCNNNGGC-3' and activate genes involved in a large spectrum of important biological functions including proper eye, face, body wall, limb and neural tube development. They also suppress a number of genes including MCAM/MUC18, C/EBP alpha and MYC. AP-2-alpha is the only AP-2 protein required for early morphogenesis of the lens vesicle. Together with the CITED2 coactivator, stimulates the PITX2 P1 promoter transcription activation. Associates with chromatin to the PITX2 P1 promoter region. This chain is Transcription factor AP-2-alpha (TFAP2A), found in Ovis aries (Sheep).